A 126-amino-acid polypeptide reads, in one-letter code: Glycine cleavage system H protein (126 aa).

The 83-residue stretch at 21–103 folds into the Lipoyl-binding domain; sequence TATIGISEHA…YEGGWIVKVK (83 aa). Lysine 62 is modified (N6-lipoyllysine).

This sequence belongs to the GcvH family. As to quaternary structure, the glycine cleavage system is composed of four proteins: P, T, L and H. The cofactor is (R)-lipoate.

Its function is as follows. The glycine cleavage system catalyzes the degradation of glycine. The H protein shuttles the methylamine group of glycine from the P protein to the T protein. This is Glycine cleavage system H protein from Vibrio campbellii (strain ATCC BAA-1116).